A 395-amino-acid polypeptide reads, in one-letter code: Testis-expressed protein 44 (395 aa).

Disordered regions lie at residues 1-32 (MALPGYPLGNVDDSRSKDSPAGEPQGQVPLTA), 46-100 (WQDI…LQVS), 133-215 (KMSQ…SDES), and 235-258 (FPPPPAGSVSPSPGPHEVALGRRP). Polar residues predominate over residues 53–65 (SFKTATPRAISTS). Residues 87–98 (PLLPSQNPSPLQ) are compositionally biased toward low complexity. The span at 192-207 (SAEEKAEHPKAPHPEA) shows a compositional bias: basic and acidic residues. Residue Ser333 is modified to Phosphoserine.

In terms of tissue distribution, testis. Detected in germ cells at all stages of the seminiferous epithelium, strong expression in elongating spermatids (at protein level).

The protein localises to the cytoplasm. The polypeptide is Testis-expressed protein 44 (Homo sapiens (Human)).